The following is a 192-amino-acid chain: Ethylene-responsive transcription factor ERF027 (192 aa).

A DNA-binding region (AP2/ERF) is located at residues 18 to 74; that stretch reads VYRGIRCRSGKWVSEIREPRKTTRIWLGTYPMAEMAAAAYDVAAMALKGREAVLNFP. Disordered stretches follow at residues 104 to 132 and 167 to 192; these read CEEGEEEKKAKEKKSSSSKSRARECHVDN and APPSWMGSRPSDDSPENSNDEDLWGY. Acidic residues predominate over residues 179–192; that stretch reads DSPENSNDEDLWGY.

This sequence belongs to the AP2/ERF transcription factor family. ERF subfamily.

It is found in the nucleus. Probably acts as a transcriptional activator. Binds to the GCC-box pathogenesis-related promoter element. May be involved in the regulation of gene expression by stress factors and by components of stress signal transduction pathways. The chain is Ethylene-responsive transcription factor ERF027 (ERF027) from Arabidopsis thaliana (Mouse-ear cress).